A 596-amino-acid polypeptide reads, in one-letter code: Linalool synthase TPS3, chloroplastic (596 aa).

The transit peptide at 1–39 (MISSLNPLFTTHRSGVIAQQFFASSAAASINSVSSLKIA) directs the protein to the chloroplast. (2E)-geranyl diphosphate-binding residues include arginine 308, aspartate 345, aspartate 349, arginine 486, and asparagine 489. The Mg(2+) site is built by aspartate 345 and aspartate 349. A DDXXD motif motif is present at residues 345–349 (DDIYD). Mg(2+) contacts are provided by asparagine 489, threonine 493, and serine 497.

Belongs to the terpene synthase family. Tpsb subfamily. As to quaternary structure, monomer. Requires Mg(2+) as cofactor. It depends on Mn(2+) as a cofactor. In terms of tissue distribution, expressed in flowers and fruits.

It localises to the plastid. The protein resides in the chloroplast. It catalyses the reaction (2E)-geranyl diphosphate = beta-myrcene + diphosphate. The enzyme catalyses (2E)-geranyl diphosphate + H2O = linalool + diphosphate. The catalysed reaction is (2E)-geranyl diphosphate = (Z)-beta-ocimene + diphosphate. It carries out the reaction (2E)-geranyl diphosphate = (E)-beta-ocimene + diphosphate. The protein operates within secondary metabolite biosynthesis; terpenoid biosynthesis. In terms of biological role, monoterpene synthase (mono-TPS) involved in the biosynthesis of monoterpenes natural products, constituent of coffee beverage aroma. Catalyzes the conversion of (2E)-geranyl diphosphate (GPP) into linalool and beta-myrcene, and, as minor products, cis-ocimene and trans-ocimene. Not able to use geranylgeranyl pyrophosphate (GGPP) and farnesyl pyrophosphate (FPP) as substrates. The chain is Linalool synthase TPS3, chloroplastic from Coffea arabica (Arabian coffee).